The chain runs to 445 residues: Ribulose bisphosphate carboxylase large chain (445 aa).

Substrate is bound by residues Asn-89 and Thr-139. Lys-141 acts as the Proton acceptor in catalysis. Lys-143 contributes to the substrate binding site. Mg(2+) is bound by residues Lys-167, Asp-169, and Glu-170. Lys-167 carries the post-translational modification N6-carboxylysine. His-260 (proton acceptor) is an active-site residue. The substrate site is built by Arg-261, His-293, and Ser-345.

The protein belongs to the RuBisCO large chain family. Type I subfamily. Heterohexadecamer of 8 large chains and 8 small chains; disulfide-linked. The disulfide link is formed within the large subunit homodimers. The cofactor is Mg(2+). In terms of processing, the disulfide bond which can form in the large chain dimeric partners within the hexadecamer appears to be associated with oxidative stress and protein turnover.

It localises to the plastid. The protein localises to the chloroplast. It catalyses the reaction 2 (2R)-3-phosphoglycerate + 2 H(+) = D-ribulose 1,5-bisphosphate + CO2 + H2O. It carries out the reaction D-ribulose 1,5-bisphosphate + O2 = 2-phosphoglycolate + (2R)-3-phosphoglycerate + 2 H(+). In terms of biological role, ruBisCO catalyzes two reactions: the carboxylation of D-ribulose 1,5-bisphosphate, the primary event in carbon dioxide fixation, as well as the oxidative fragmentation of the pentose substrate in the photorespiration process. Both reactions occur simultaneously and in competition at the same active site. The protein is Ribulose bisphosphate carboxylase large chain of Callicarpa dichotoma (Purple beautyberry).